A 1227-amino-acid polypeptide reads, in one-letter code: Tyrosine-protein kinase receptor ver-3 (1227 aa).

The N-terminal stretch at 1–17 is a signal peptide; it reads MKLKLTVLLILVHASAS. Residues 18–764 are Extracellular-facing; it reads YKPPAIEVED…VQVNNAPKGS (747 aa). One can recognise an Ig-like C2-type 1 domain in the interval 20-110; the sequence is PPAIEVEDYQ…RESDTGTYSC (91 aa). A disulfide bond links C52 and C110. N-linked (GlcNAc...) asparagine glycans are attached at residues N119, N211, N245, N255, N381, N425, and N528. The Ig-like C2-type 2 domain maps to 200-325; the sequence is VNFECRYKKE…EHENKETKYT (126 aa). A disulfide bridge connects residues C204 and C313. 2 consecutive Ig-like C2-type domains span residues 565 to 666 and 673 to 758; these read PHHE…TSID and PSIT…VQVN. 2 disulfide bridges follow: C592–C650 and C696–C740. N697 carries an N-linked (GlcNAc...) asparagine glycan. A helical transmembrane segment spans residues 765–785; sequence LFFYWFLALLLLISIIAVFLL. Topologically, residues 786 to 1227 are cytoplasmic; sequence TCKLRASNRL…ERYLIVESHA (442 aa). Residues 847 to 1175 form the Protein kinase domain; it reads LEILNPIGSG…HMRDSSSQFL (329 aa). ATP-binding positions include 853–861 and K886; that span reads IGSGHFGVV. The active-site Proton acceptor is D1030. The disordered stretch occupies residues 1194–1227; sequence DWIQDSRPDVPNVSFQKSPKKQKEERYLIVESHA. Residues 1214-1227 show a composition bias toward basic and acidic residues; the sequence is KQKEERYLIVESHA.

This sequence belongs to the protein kinase superfamily. Tyr protein kinase family. In terms of tissue distribution, expressed in the ALA neuron.

The protein resides in the cell membrane. The catalysed reaction is L-tyrosyl-[protein] + ATP = O-phospho-L-tyrosyl-[protein] + ADP + H(+). Functionally, receptor tyrosine kinase which may be involved, downstream of pvf-1, in the positioning of ray 1, the most anterior ray sensillum in the male tail. The sequence is that of Tyrosine-protein kinase receptor ver-3 from Caenorhabditis elegans.